The following is a 906-amino-acid chain: Catenin alpha-2 (906 aa).

Residues 866-880 (KKPLVKREKPEEYQT) show a composition bias toward basic and acidic residues. A disordered region spans residues 866 to 892 (KKPLVKREKPEEYQTRVRRGSQKKHIS). The span at 881-891 (RVRRGSQKKHI) shows a compositional bias: basic residues.

It belongs to the vinculin/alpha-catenin family. Interacts with CDH1 and CDH2. As to expression, mainly in the nervous system (at protein level).

It localises to the cell membrane. The protein localises to the cytoplasm. The protein resides in the cytoskeleton. Its subcellular location is the cell junction. It is found in the adherens junction. It localises to the cell projection. The protein localises to the axon. The protein resides in the nucleus. Its function is as follows. May function as a linker between cadherin adhesion receptors and the cytoskeleton to regulate cell-cell adhesion and differentiation in the nervous system. This Gallus gallus (Chicken) protein is Catenin alpha-2 (CTNNA2).